The sequence spans 286 residues: Carbohydrate-binding domain-containing protein Cthe_2159 (286 aa).

A signal peptide spans 1 to 20; it reads MSIKKLILAASILTTLALTG. A lipid anchor (N-palmitoyl cysteine) is attached at Cys21. Residue Cys21 is the site of S-diacylglycerol cysteine attachment. The interval 124–225 is polygalacturonic acid-binding; that stretch reads GKDNVLTDAE…GIKVENTEEP (102 aa). The Ca(2+) site is built by Arg152, Asp153, Asp154, Asn177, Asp178, Asp215, Asp243, Asp244, and Asp247.

As to quaternary structure, monomer.

It is found in the cell membrane. In terms of biological role, binds cellulosic and pectic substrates. Displays no enzyme activity (in vitro). This Acetivibrio thermocellus (strain ATCC 27405 / DSM 1237 / JCM 9322 / NBRC 103400 / NCIMB 10682 / NRRL B-4536 / VPI 7372) (Clostridium thermocellum) protein is Carbohydrate-binding domain-containing protein Cthe_2159.